The following is a 571-amino-acid chain: Wee1-like protein kinase 1-A (571 aa).

Positions 1–101 are disordered; the sequence is MSLQPVPHRL…PDCPGTPPHK (101 aa). Residues 81 to 98 show a composition bias toward pro residues; the sequence is PASPPGPAASPPDCPGTP. The Protein kinase domain occupies 224-494; sequence FHELEKIGSG…SMALVKHSVL (271 aa). ATP contacts are provided by residues 230 to 238 and Lys-253; that span reads IGSGEFGSV. Asp-351 serves as the catalytic Proton acceptor. Mg(2+) contacts are provided by Asn-356 and Asp-388. Positions 500–539 form a coiled coil; sequence KNAEQLRIELNAEKFKNALLQKELKKAQIAKAAAEERALF.

The protein belongs to the protein kinase superfamily. Ser/Thr protein kinase family. WEE1 subfamily. As to expression, zygotically expressed. Expressed in regions of the embryo that are devoid of mitotic cells, such as the involuting mesoderm.

It is found in the nucleus. It catalyses the reaction L-tyrosyl-[protein] + ATP = O-phospho-L-tyrosyl-[protein] + ADP + H(+). Functionally, acts as a zygotic negative regulator of entry into mitosis (G2 to M transition) by protecting the nucleus from cytoplasmically activated cyclin B1-complexed cdk1 before the onset of mitosis by mediating phosphorylation of cdk1 on 'Tyr-15'. Specifically phosphorylates and inactivates cyclin B1-complexed cdk1 reaching a maximum during G2 phase and a minimum as cells enter M phase. Phosphorylation of cyclin B1-cdk1 occurs exclusively on 'Tyr-15' and phosphorylation of monomeric cdk1 does not occur. Involved in convergent extension of the paraxial mesoderm during neurulation by inhibiting the cell cycle. In Xenopus laevis (African clawed frog), this protein is Wee1-like protein kinase 1-A (wee1-a).